Here is a 328-residue protein sequence, read N- to C-terminus: Malate dehydrogenase (328 aa).

11 to 17 contributes to the NAD(+) binding site; the sequence is GAAGQIG. Substrate-binding residues include arginine 94 and arginine 100. Residues asparagine 107, glutamine 114, and 131 to 133 contribute to the NAD(+) site; that span reads VGN. Positions 133 and 164 each coordinate substrate. Histidine 189 acts as the Proton acceptor in catalysis.

This sequence belongs to the LDH/MDH superfamily. MDH type 2 family.

The catalysed reaction is (S)-malate + NAD(+) = oxaloacetate + NADH + H(+). In terms of biological role, catalyzes the reversible oxidation of malate to oxaloacetate. The sequence is that of Malate dehydrogenase from Acinetobacter baumannii (strain AB0057).